The chain runs to 387 residues: Lipid-A-disaccharide synthase (387 aa).

The protein belongs to the LpxB family.

It catalyses the reaction a lipid X + a UDP-2-N,3-O-bis[(3R)-3-hydroxyacyl]-alpha-D-glucosamine = a lipid A disaccharide + UDP + H(+). Its pathway is bacterial outer membrane biogenesis; LPS lipid A biosynthesis. In terms of biological role, condensation of UDP-2,3-diacylglucosamine and 2,3-diacylglucosamine-1-phosphate to form lipid A disaccharide, a precursor of lipid A, a phosphorylated glycolipid that anchors the lipopolysaccharide to the outer membrane of the cell. The sequence is that of Lipid-A-disaccharide synthase from Nitrosococcus oceani (strain ATCC 19707 / BCRC 17464 / JCM 30415 / NCIMB 11848 / C-107).